Reading from the N-terminus, the 543-residue chain is Telomerase Cajal body protein 1 homolog (543 aa).

The tract at residues 95-128 is disordered; the sequence is GRPKNAVESPHAGVPMETSLAAEEEANGDEEEES. The span at 116 to 127 shows a compositional bias: acidic residues; sequence AEEEANGDEEEE. 3 WD repeats span residues 237 to 283, 291 to 329, and 378 to 421; these read PEGG…LRCS, DEVM…RFCD, and GHKG…QPLV.

The protein belongs to the TCAB1 family.

It localises to the nucleus. Its subcellular location is the cajal body. In terms of biological role, RNA chaperone that plays a key role in Cajal body formation. Specifically recognizes and binds the Cajal body box (CAB box) present in both small Cajal body RNAs (scaRNAs). Probably acts by mediating localization of scaRNAs to Cajal bodies. The protein is Telomerase Cajal body protein 1 homolog of Drosophila melanogaster (Fruit fly).